Reading from the N-terminus, the 74-residue chain is UPF0741 protein BcerKBAB4_5177 (74 aa).

This sequence belongs to the UPF0741 family.

This is UPF0741 protein BcerKBAB4_5177 from Bacillus mycoides (strain KBAB4) (Bacillus weihenstephanensis).